A 199-amino-acid chain; its full sequence is Recombination protein RecR (199 aa).

The segment at 57–72 (CEICGNLDTKSICHIC) adopts a C4-type zinc-finger fold. Positions 80–175 (STIAIVETVA…KISRLASGIP (96 aa)) constitute a Toprim domain.

It belongs to the RecR family.

In terms of biological role, may play a role in DNA repair. It seems to be involved in an RecBC-independent recombinational process of DNA repair. It may act with RecF and RecO. The polypeptide is Recombination protein RecR (Rickettsia prowazekii (strain Madrid E)).